Reading from the N-terminus, the 839-residue chain is Eukaryotic translation initiation factor 3 subunit C (839 aa).

The tract at residues 1-93 (MSRFFVAGYN…DSDSEDEGRR (93 aa)) is disordered. 2 stretches are compositionally biased toward acidic residues: residues 14-27 (SSEE…DEEL) and 34-58 (GEQE…SDSD). The region spanning 585-759 (FHQHINLELL…AFIQFASTEP (175 aa)) is the PCI domain. Residues 783-839 (EKTSSNGYGKKQPQQQQQQQQQQQQQQQQQKDLLQEDNSRFRYANVNTNNDEFQTTA) are disordered. Residues 794 to 812 (QPQQQQQQQQQQQQQQQQQ) are compositionally biased toward low complexity. The segment covering 827–839 (NVNTNNDEFQTTA) has biased composition (polar residues).

It belongs to the eIF-3 subunit C family. Component of the eukaryotic translation initiation factor 3 (eIF-3) complex.

Its subcellular location is the cytoplasm. Its function is as follows. Component of the eukaryotic translation initiation factor 3 (eIF-3) complex, which is involved in protein synthesis of a specialized repertoire of mRNAs and, together with other initiation factors, stimulates binding of mRNA and methionyl-tRNAi to the 40S ribosome. The eIF-3 complex specifically targets and initiates translation of a subset of mRNAs involved in cell proliferation. The sequence is that of Eukaryotic translation initiation factor 3 subunit C from Scheffersomyces stipitis (strain ATCC 58785 / CBS 6054 / NBRC 10063 / NRRL Y-11545) (Yeast).